Here is a 367-residue protein sequence, read N- to C-terminus: Probable peptidoglycan glycosyltransferase FtsW (367 aa).

The next 9 membrane-spanning stretches (helical) occupy residues 32-52 (LIFILIGLFAMAFTFLMPMKF), 57-77 (AFWGYCICFLLLALVLVPGIG), 87-107 (IPIGPFNFQPSEFAKLTMIVF), 119-139 (IHGLKGFLPIIIYLGIICFLL), 149-169 (MVVVAIVMSILLLGGLGFALF), 171-191 (LLFLSAVLLVIAAILTAPWRM), 251-271 (VVGEELGFVGIFFVILLFVLL), 296-316 (GVVVWFGVQAIVNLGVCFGVF), and 323-343 (LPFISYGGSSIVISLMAFGLL).

The protein belongs to the SEDS family. FtsW subfamily.

The protein resides in the cell inner membrane. It carries out the reaction [GlcNAc-(1-&gt;4)-Mur2Ac(oyl-L-Ala-gamma-D-Glu-L-Lys-D-Ala-D-Ala)](n)-di-trans,octa-cis-undecaprenyl diphosphate + beta-D-GlcNAc-(1-&gt;4)-Mur2Ac(oyl-L-Ala-gamma-D-Glu-L-Lys-D-Ala-D-Ala)-di-trans,octa-cis-undecaprenyl diphosphate = [GlcNAc-(1-&gt;4)-Mur2Ac(oyl-L-Ala-gamma-D-Glu-L-Lys-D-Ala-D-Ala)](n+1)-di-trans,octa-cis-undecaprenyl diphosphate + di-trans,octa-cis-undecaprenyl diphosphate + H(+). It functions in the pathway cell wall biogenesis; peptidoglycan biosynthesis. Functionally, peptidoglycan polymerase that is essential for cell division. The chain is Probable peptidoglycan glycosyltransferase FtsW from Taylorella equigenitalis (strain MCE9).